A 721-amino-acid polypeptide reads, in one-letter code: Photosystem I P700 chlorophyll a apoprotein A1 (721 aa).

The next 8 helical transmembrane spans lie at 61-84, 147-170, 186-210, 282-300, 337-360, 376-402, 424-446, and 522-540; these read VFSA…FHGA, LYCT…FHYH, LNHH…HVSL, TAHH…GHMY, WHAQ…HHMY, LSLF…IFMV, AIVS…LYIH, and FLVH…LILL. 2 residues coordinate [4Fe-4S] cluster: Cys-564 and Cys-573. A run of 2 helical transmembrane segments spans residues 580-601 and 655-677; these read HVFL…HFSW and LSAY…MFLF. His-666 contacts chlorophyll a'. Met-674 and Tyr-682 together coordinate chlorophyll a. Trp-683 contributes to the phylloquinone binding site. The helical transmembrane segment at 715-721 threads the bilayer; it reads AVGVAHY.

It belongs to the PsaA/PsaB family. In terms of assembly, the PsaA/B heterodimer binds the P700 chlorophyll special pair and subsequent electron acceptors. PSI consists of a core antenna complex that captures photons, and an electron transfer chain that converts photonic excitation into a charge separation. The eukaryotic PSI reaction center is composed of at least 11 subunits. The cofactor is P700 is a chlorophyll a/chlorophyll a' dimer, A0 is one or more chlorophyll a, A1 is one or both phylloquinones and FX is a shared 4Fe-4S iron-sulfur center..

The protein localises to the plastid. It localises to the chloroplast thylakoid membrane. It catalyses the reaction reduced [plastocyanin] + hnu + oxidized [2Fe-2S]-[ferredoxin] = oxidized [plastocyanin] + reduced [2Fe-2S]-[ferredoxin]. Its function is as follows. PsaA and PsaB bind P700, the primary electron donor of photosystem I (PSI), as well as the electron acceptors A0, A1 and FX. PSI is a plastocyanin-ferredoxin oxidoreductase, converting photonic excitation into a charge separation, which transfers an electron from the donor P700 chlorophyll pair to the spectroscopically characterized acceptors A0, A1, FX, FA and FB in turn. Oxidized P700 is reduced on the lumenal side of the thylakoid membrane by plastocyanin. This Ginkgo biloba (Ginkgo) protein is Photosystem I P700 chlorophyll a apoprotein A1.